The primary structure comprises 449 residues: Methylenetetrahydrofolate--tRNA-(uracil-5-)-methyltransferase TrmFO (449 aa).

10-15 (GGGLAG) serves as a coordination point for FAD.

The protein belongs to the MnmG family. TrmFO subfamily. Requires FAD as cofactor.

Its subcellular location is the cytoplasm. The catalysed reaction is uridine(54) in tRNA + (6R)-5,10-methylene-5,6,7,8-tetrahydrofolate + NADH + H(+) = 5-methyluridine(54) in tRNA + (6S)-5,6,7,8-tetrahydrofolate + NAD(+). The enzyme catalyses uridine(54) in tRNA + (6R)-5,10-methylene-5,6,7,8-tetrahydrofolate + NADPH + H(+) = 5-methyluridine(54) in tRNA + (6S)-5,6,7,8-tetrahydrofolate + NADP(+). Its function is as follows. Catalyzes the folate-dependent formation of 5-methyl-uridine at position 54 (M-5-U54) in all tRNAs. The sequence is that of Methylenetetrahydrofolate--tRNA-(uracil-5-)-methyltransferase TrmFO from Sphingopyxis alaskensis (strain DSM 13593 / LMG 18877 / RB2256) (Sphingomonas alaskensis).